Here is a 510-residue protein sequence, read N- to C-terminus: Dentin matrix acidic phosphoprotein 1 (510 aa).

The N-terminal stretch at 1–16 (MKTTILLMFLWGLSCA) is a signal peptide. The interval 23-510 (QNTESKSSEE…QDDNDCQDGY (488 aa)) is disordered. 2 stretches are compositionally biased toward acidic residues: residues 61–77 (QANE…EVLG) and 101–119 (NKDD…DDDG). Composition is skewed to basic and acidic residues over residues 123-180 (PEER…RPEG), 273-288 (RLPE…DSRT), and 299-328 (PDSK…RSPE). Positions 333-343 (VQDPSSESSQE) are enriched in polar residues. N-linked (GlcNAc...) asparagine glycosylation occurs at asparagine 351. Positions 358–367 (EALHESRGDN) are enriched in basic and acidic residues. Positions 364-366 (RGD) match the Cell attachment site motif. Residue asparagine 370 is glycosylated (N-linked (GlcNAc...) asparagine). Positions 407–417 (SESHESLRSSE) are enriched in basic and acidic residues. Asparagine 427 and asparagine 464 each carry an N-linked (GlcNAc...) asparagine glycan. The span at 481-499 (TEVESRKLTVDAYHNKPIG) shows a compositional bias: basic and acidic residues. The span at 500 to 510 (DQDDNDCQDGY) shows a compositional bias: acidic residues.

Interacts with importin alpha. Phosphorylated in the cytosol and extracellular matrix and unphosphorylated in the nucleus. Phosphorylation is necessary for nucleocytoplasmic transport and may be catalyzed by a nuclear isoform of CK2 and can be augmented by calcium. Phosphorylated (in vitro) by FAM20C in the extracellular medium at sites within the S-x-E/pS motif. Expressed in fetal brain, bone and tooth particularly in odontoblast, but not in ameloblast. Not expressed in liver and skin.

It is found in the nucleus. It localises to the cytoplasm. The protein resides in the secreted. Its subcellular location is the extracellular space. The protein localises to the extracellular matrix. In terms of biological role, may have a dual function during osteoblast differentiation. In the nucleus of undifferentiated osteoblasts, unphosphorylated form acts as a transcriptional component for activation of osteoblast-specific genes like osteocalcin. During the osteoblast to osteocyte transition phase it is phosphorylated and exported into the extracellular matrix, where it regulates nucleation of hydroxyapatite. In Bos taurus (Bovine), this protein is Dentin matrix acidic phosphoprotein 1 (DMP1).